The following is a 357-amino-acid chain: Arginine kinase Scy p 2.0101 (357 aa).

A Phosphagen kinase N-terminal domain is found at 9 to 91 (KLEEGFKKLE…FDPIIEDYHK (83 aa)). An L-arginine-binding site is contributed by 64–68 (GVGVY). 2 igE-binding and beta-hexosaminidase release from rat basophilic leukemia (RBL) cells regions span residues 113 to 127 (VDPD…RVRC) and 127 to 155 (CGRS…VSST). Positions 119–356 (FVISTRVRCG…LELIKIEKEM (238 aa)) constitute a Phosphagen kinase C-terminal domain. 122–126 (STRVR) contributes to the ATP binding site. Histidine 185 contacts ATP. The cysteines at positions 201 and 271 are disulfide-linked. The interval 204–218 (WPTGRGIYHNDNKTF) is igE-binding and beta-hexosaminidase release from rat basophilic leukemia (RBL) cells. The igE-binding, but no beta-hexosaminidase release from rat basophilic leukemia (RBL) cells stretch occupies residues 211–225 (YHNDNKTFLVWCNEE). An L-arginine-binding site is contributed by glutamate 225. Arginine 229 serves as a coordination point for ATP. Cysteine 271 contacts L-arginine. ATP is bound by residues 280 to 284 (RASVH) and 309 to 314 (RGTRGE). An L-arginine-binding site is contributed by glutamate 314. The interval 316-330 (TEAEGGVYDISNKRR) is igE-binding, but no beta-hexosaminidase release from rat basophilic leukemia (RBL) cells.

This sequence belongs to the ATP:guanido phosphotransferase family. Post-translationally, glycosylated. In terms of tissue distribution, muscle (at protein level).

It carries out the reaction L-arginine + ATP = N(omega)-phospho-L-arginine + ADP + H(+). Functionally, catalyzes the reversible transfer of high energy ATP gamma-phosphate group to L-arginine. This chain is Arginine kinase Scy p 2.0101, found in Scylla paramamosain (Mud crab).